Reading from the N-terminus, the 48-residue chain is Large ribosomal subunit protein bL36c (48 aa).

Belongs to the bacterial ribosomal protein bL36 family.

It localises to the plastid. The protein localises to the chloroplast. The protein is Large ribosomal subunit protein bL36c of Rhodomonas salina (Cryptomonas salina).